Here is a 94-residue protein sequence, read N- to C-terminus: Co-chaperonin GroES (94 aa).

Belongs to the GroES chaperonin family. In terms of assembly, heptamer of 7 subunits arranged in a ring. Interacts with the chaperonin GroEL.

The protein resides in the cytoplasm. In terms of biological role, together with the chaperonin GroEL, plays an essential role in assisting protein folding. The GroEL-GroES system forms a nano-cage that allows encapsulation of the non-native substrate proteins and provides a physical environment optimized to promote and accelerate protein folding. GroES binds to the apical surface of the GroEL ring, thereby capping the opening of the GroEL channel. The polypeptide is Co-chaperonin GroES (Streptococcus equinus (Streptococcus bovis)).